The sequence spans 1517 residues: Neurite extension and migration factor (1517 aa).

Residues 381-405 show a composition bias toward basic and acidic residues; it reads DKKKGKEEVHEDKSIEKKDEKDNGE. 7 disordered regions span residues 381–416, 505–529, 644–697, 732–775, 1065–1084, 1161–1228, and 1372–1422; these read DKKK…PCSG, VNER…PKKR, SMEA…GLIG, KKIK…HMSE, RHSS…SPQS, DEPA…KKGK, and AGTP…SSED. Residues 644–663 are compositionally biased toward polar residues; that stretch reads SMEASASSKQVSFGSDQKQA. The segment covering 678–687 has biased composition (low complexity); that stretch reads SALLAAPSSA. Residues 764–773 show a composition bias toward polar residues; that stretch reads TPGTSNSSHM.

The protein localises to the nucleus. It is found in the cytoplasm. Involved in neurite outgrowth by regulating cell-cell adhesion via the N-cadherin signaling pathway. May act by regulating expression of protein-coding genes, such as N-cadherins and integrin beta-1 (ITGB1). This Rattus norvegicus (Rat) protein is Neurite extension and migration factor.